The following is a 70-amino-acid chain: Putative membrane protein insertion efficiency factor (70 aa).

It belongs to the UPF0161 family.

The protein localises to the cell membrane. Functionally, could be involved in insertion of integral membrane proteins into the membrane. This Moorella thermoacetica (strain ATCC 39073 / JCM 9320) protein is Putative membrane protein insertion efficiency factor.